The chain runs to 1216 residues: ATP-dependent helicase/nuclease subunit A (1216 aa).

The UvrD-like helicase ATP-binding domain maps to 26 to 488 (QKKTAEQIEA…ILLKANFRSS (463 aa)). 47–54 (ASAGSGKT) lines the ATP pocket. The UvrD-like helicase C-terminal domain maps to 515 to 802 (KHQLVFANTK…ELMTIHKSKG (288 aa)).

The protein belongs to the helicase family. AddA subfamily. In terms of assembly, heterodimer of AddA and AddB/RexB. It depends on Mg(2+) as a cofactor.

It catalyses the reaction Couples ATP hydrolysis with the unwinding of duplex DNA by translocating in the 3'-5' direction.. It carries out the reaction ATP + H2O = ADP + phosphate + H(+). In terms of biological role, the heterodimer acts as both an ATP-dependent DNA helicase and an ATP-dependent, dual-direction single-stranded exonuclease. Recognizes the chi site generating a DNA molecule suitable for the initiation of homologous recombination. The AddA nuclease domain is required for chi fragment generation; this subunit has the helicase and 3' -&gt; 5' nuclease activities. This chain is ATP-dependent helicase/nuclease subunit A, found in Streptococcus pneumoniae (strain ATCC 700669 / Spain 23F-1).